Reading from the N-terminus, the 374-residue chain is UPF0496 protein At4g34320 (374 aa).

The next 2 helical transmembrane spans lie at 215–235 (IIFV…AAMA) and 238–258 (PVAA…GKWI).

It belongs to the UPF0496 family.

It localises to the membrane. In Arabidopsis thaliana (Mouse-ear cress), this protein is UPF0496 protein At4g34320.